The primary structure comprises 250 residues: Acetylglutamate kinase (250 aa).

Residues 41–42, Arg-63, and Asn-156 each bind substrate; that span reads GG.

It belongs to the acetylglutamate kinase family. ArgB subfamily.

It is found in the cytoplasm. The catalysed reaction is N-acetyl-L-glutamate + ATP = N-acetyl-L-glutamyl 5-phosphate + ADP. It participates in amino-acid biosynthesis; L-arginine biosynthesis; N(2)-acetyl-L-ornithine from L-glutamate: step 2/4. In terms of biological role, catalyzes the ATP-dependent phosphorylation of N-acetyl-L-glutamate. In Listeria monocytogenes serotype 4a (strain HCC23), this protein is Acetylglutamate kinase.